A 2136-amino-acid polypeptide reads, in one-letter code: U5 small nuclear ribonucleoprotein 200 kDa helicase (2136 aa).

Ser17 and Ser26 each carry phosphoserine. A Glycyl lysine isopeptide (Lys-Gly) (interchain with G-Cter in SUMO2) cross-link involves residue Lys46. The interval 50–80 is disordered; the sequence is TRMGDKAQRTKPQMQEERRAKRRKRDEDRHD. Positions 54–84 form a coiled coil; it reads DKAQRTKPQMQEERRAKRRKRDEDRHDINKM. Ser225 is modified (phosphoserine). Phosphothreonine is present on Thr389. Positions 395–2129 are interaction with C9orf78 and WBP4; the sequence is DLDQGGEALA…YKFSVDVKEA (1735 aa). A Helicase ATP-binding 1 domain is found at 490 to 673; it reads RAALETDENL…FLRVDPAKGL (184 aa). 503-510 is an ATP binding site; sequence APTGAGKT. The DEIH box motif lies at 615–618; that stretch reads DEIH. Residues 684 to 921 enclose the Helicase C-terminal 1 domain; sequence PLEQTYVGIT…NAKDAVNWLG (238 aa). Tyr709 is subject to Phosphotyrosine. Lys971 carries the N6-acetyllysine modification. Residues 981–1286 enclose the SEC63 1 domain; the sequence is VTELGRIASH…SCETQLPVSF (306 aa). Residues 1282-2136 form an interaction with TSSC4 region; sequence LPVSFRHLIL…KEAETDSDSD (855 aa). Residues 1337 to 1512 form the Helicase ATP-binding 2 domain; sequence NTVYNSDDNV…WLGCSATSTF (176 aa). 1350–1357 lines the ATP pocket; the sequence is APTGSGKT. A Phosphothreonine modification is found at Thr1428. The DEVH box signature appears at 1454–1457; it reads DEVH. Positions 1545-1753 constitute a Helicase C-terminal 2 domain; sequence PVYHAITKHS…TIENKQDAVD (209 aa). At Thr1765 the chain carries Phosphothreonine. The SEC63 2 domain occupies 1812–2124; the sequence is PLNLGMIAAY…GCDQEYKFSV (313 aa). Ser2002 carries the phosphoserine modification. Thr2131 carries the phosphothreonine modification. Phosphoserine is present on residues Ser2133 and Ser2135.

The protein belongs to the helicase family. SKI2 subfamily. Component of a core complex containing at least PRPF8, SNRNP200, EFTUD2 and SNRNP40. Component of the U5 snRNP and U4/U6-U5 tri-snRNP complexes, building blocks of the spliceosome. Component of the U4/U6-U5 tri-snRNP complex composed of the U4, U6 and U5 snRNAs and at least PRPF3, PRPF4, PRPF6, PRPF8, PRPF31, SNRNP200, TXNL4A, SNRNP40, DDX23, CD2BP2, PPIH, SNU13, EFTUD2, SART1 and USP39. Component of precatalytic, catalytic and postcatalytic spliceosomal complexes. Component of the minor spliceosome, which splices U12-type introns. Interacts with C9orf78; the interaction is direct and mutually exclusive with its interaction with WBP4. Interacts with WBP4; the interaction is mutually exclusive with its interaction with C9orf78. Interacts with PRPF8. Interacts with TSSC4; the interaction is direct, excludes recruitment of C9ORF78 and WBP4 to SNRNP200 and negatively regulates its RNA helicase activity. As to expression, widely expressed.

The protein localises to the nucleus. The catalysed reaction is ATP + H2O = ADP + phosphate + H(+). Catalyzes the ATP-dependent unwinding of U4/U6 RNA duplices, an essential step in the assembly of a catalytically active spliceosome. Plays a role in pre-mRNA splicing as a core component of precatalytic, catalytic and postcatalytic spliceosomal complexes. As a component of the minor spliceosome, involved in the splicing of U12-type introns in pre-mRNAs. Involved in spliceosome assembly, activation and disassembly. Mediates changes in the dynamic network of RNA-RNA interactions in the spliceosome. The sequence is that of U5 small nuclear ribonucleoprotein 200 kDa helicase (SNRNP200) from Homo sapiens (Human).